Consider the following 455-residue polypeptide: Exodeoxyribonuclease 7 large subunit (455 aa).

The protein belongs to the XseA family. In terms of assembly, heterooligomer composed of large and small subunits.

The protein resides in the cytoplasm. The catalysed reaction is Exonucleolytic cleavage in either 5'- to 3'- or 3'- to 5'-direction to yield nucleoside 5'-phosphates.. In terms of biological role, bidirectionally degrades single-stranded DNA into large acid-insoluble oligonucleotides, which are then degraded further into small acid-soluble oligonucleotides. The protein is Exodeoxyribonuclease 7 large subunit of Oceanobacillus iheyensis (strain DSM 14371 / CIP 107618 / JCM 11309 / KCTC 3954 / HTE831).